We begin with the raw amino-acid sequence, 307 residues long: N-myc-interactor (307 aa).

The segment at 1 to 24 (MEADKDDTQQILKEHSPDEFIKDE) is disordered. S16 is subject to Phosphoserine. Residue K22 forms a Glycyl lysine isopeptide (Lys-Gly) (interchain with G-Cter in ubiquitin) linkage. Positions 30-64 (IDEITKKNIQLKKEIQKLETELQEATKEFQIKEDI) form a coiled coil. 2 NID domains span residues 103–192 (GQAL…GEVD) and 201–292 (GSAV…EVDV).

The protein belongs to the NMI family. In terms of assembly, interacts with MYCN and MYC, as well as with other transcription factors with a Zip, HLH or a HLH-Zip motif. Interacts with all STAT proteins except STAT2. Interacts with IRF7, the interaction is direct and leads to the inhibition of IRF7-mediated type I IFN production. Interacts (via coiled-coil domain) with TRIM21 (via the SPRY domain); the interaction leads to 'Lys-63'-linked ubiquitination of NMI. Interacts with IFI35; the interaction is direct and is facilitated by TRIM21. Interacts with TLR4; the interaction is direct and leads to NF-kappa-B activation. (Microbial infection) Interacts with human cytomegalovirus protein UL23; this interaction inhibits NMI-mediated transcription of interferon-gamma stimulated genes. Post-translationally, ubiquitinated. 'Lys-63'-linked ubiquitination by TRIM21 promotes interaction with IFI35 and inhibits virus-triggered type I IFN-beta production. As to expression, expressed in adult spleen, liver, and kidney. Expressed in fetal thymus, liver, placenta, spleen, lung, and kidney but not brain. Expressed in macrophages.

It localises to the cytoplasm. It is found in the nucleus. The protein resides in the secreted. Its function is as follows. Acts as a signaling pathway regulator involved in innate immune system response. In response to interleukin 2/IL2 and interferon IFN-gamma/IFNG, interacts with signal transducer and activator of transcription/STAT which activate the transcription of downstream genes involved in a multitude of signals for development and homeostasis. Enhances the recruitment of CBP/p300 coactivators to STAT1 and STAT5, resulting in increased STAT1- and STAT5-dependent transcription. In response to interferon IFN-alpha, associates in a complex with signaling pathway regulator IFI35 to regulate immune response; the complex formation prevents proteasome-mediated degradation of IFI35. In complex with IFI35, inhibits virus-triggered type I IFN-beta production when ubiquitinated by ubiquitin-protein ligase TRIM21. In complex with IFI35, negatively regulates nuclear factor NF-kappa-B signaling by inhibiting the nuclear translocation, activation and transcription of NF-kappa-B subunit p65/RELA, resulting in the inhibition of endothelial cell proliferation, migration and re-endothelialization of injured arteries. Negatively regulates virus-triggered type I interferon/IFN production by inducing proteosome-dependent degradation of IRF7, a transcriptional regulator of type I IFN, thereby interfering with cellular antiviral responses. Beside its role as an intracellular signaling pathway regulator, also functions extracellularly as damage-associated molecular patterns (DAMPs) to promote inflammation, when actively released by macrophage to the extracellular space during cell injury or pathogen invasion. Macrophage-secreted NMI activates NF-kappa-B signaling in adjacent macrophages through Toll-like receptor 4/TLR4 binding and activation, thereby inducing NF-kappa-B translocation from the cytoplasm into the nucleus which promotes the release of pro-inflammatory cytokines. This Homo sapiens (Human) protein is N-myc-interactor.